Reading from the N-terminus, the 579-residue chain is F-box protein At5g39450 (579 aa).

The F-box domain occupies 16–62 (TCLLLSLPEDVIAVIARFVSPRDICNLSLCCKSLCDVVDSERIWLVQ).

In Arabidopsis thaliana (Mouse-ear cress), this protein is F-box protein At5g39450.